The following is an 85-amino-acid chain: 4-hydroxyphenylacetate decarboxylase small subunit (85 aa).

8 residues coordinate [4Fe-4S] cluster: His4, Cys7, Cys20, Cys34, Cys43, Cys46, Cys60, and Cys78.

Belongs to the HPA decarboxylase small subunit family. Heterooctamer consisting of 4 large (HpdB) subunits and 4 small (HpdC) subunits, arranged as a tetramer of heterodimers. Requires [4Fe-4S] cluster as cofactor.

The catalysed reaction is 4-hydroxyphenylacetate + H(+) = 4-methylphenol + CO2. It carries out the reaction 3,4-dihydroxyphenylacetate + H(+) = 4-methylcatechol + CO2. Component of the HPA decarboxylase that decarboxylates phenylacetates with a hydroxyl group in the p-position. Active toward 4-hydroxyphenylacetate and 3,4-dihydroxyphenylacetate, forming 4-methylphenol and 4-methylcatechol, respectively. Is likely involved in the catabolism of aromatic amino acids such as tyrosine fermentation. 4-methylphenol (p-cresol) formation provides metabolic toxicity, which allows an active suppression of other microbes and may provide growth advantages for the producers in highly competitive environments. The small subunit is essential for enzymatic activity of HPA decarboxylase, and also seems to be involved in the regulation of the enzyme oligomeric state and catalytic activity. This chain is 4-hydroxyphenylacetate decarboxylase small subunit, found in Clostridioides difficile (strain CD196) (Peptoclostridium difficile).